The following is a 186-amino-acid chain: Ribosome-recycling factor (186 aa).

The protein belongs to the RRF family.

The protein resides in the cytoplasm. Responsible for the release of ribosomes from messenger RNA at the termination of protein biosynthesis. May increase the efficiency of translation by recycling ribosomes from one round of translation to another. The polypeptide is Ribosome-recycling factor (Bartonella henselae (strain ATCC 49882 / DSM 28221 / CCUG 30454 / Houston 1) (Rochalimaea henselae)).